Reading from the N-terminus, the 232-residue chain is Orotate phosphoribosyltransferase (232 aa).

Residues Arg107, Lys108, Lys111, and 133 to 141 contribute to the 5-phospho-alpha-D-ribose 1-diphosphate site; that span reads EDLTTDGGS. Orotate is bound at residue Thr137.

The protein belongs to the purine/pyrimidine phosphoribosyltransferase family. PyrE subfamily. Homodimer. It depends on Mg(2+) as a cofactor.

The catalysed reaction is orotidine 5'-phosphate + diphosphate = orotate + 5-phospho-alpha-D-ribose 1-diphosphate. The protein operates within pyrimidine metabolism; UMP biosynthesis via de novo pathway; UMP from orotate: step 1/2. Its function is as follows. Catalyzes the transfer of a ribosyl phosphate group from 5-phosphoribose 1-diphosphate to orotate, leading to the formation of orotidine monophosphate (OMP). The protein is Orotate phosphoribosyltransferase of Cereibacter sphaeroides (strain ATCC 17023 / DSM 158 / JCM 6121 / CCUG 31486 / LMG 2827 / NBRC 12203 / NCIMB 8253 / ATH 2.4.1.) (Rhodobacter sphaeroides).